An 853-amino-acid polypeptide reads, in one-letter code: Probable inorganic carbon transporter subunit DabA (853 aa).

Positions 1 to 21 are disordered; the sequence is MSHANSEETMMNTAVAHPSTS. Positions 7 to 21 are enriched in polar residues; that stretch reads EETMMNTAVAHPSTS. Cys364, Asp366, His546, and Cys561 together coordinate Zn(2+).

This sequence belongs to the inorganic carbon transporter (TC 9.A.2) DabA family. Forms a complex with DabB. The cofactor is Zn(2+).

It localises to the cell inner membrane. Its function is as follows. Part of an energy-coupled inorganic carbon pump. This is Probable inorganic carbon transporter subunit DabA from Methylovorus glucosotrophus (strain SIP3-4).